We begin with the raw amino-acid sequence, 420 residues long: ATP phosphoribosyltransferase regulatory subunit (420 aa).

Belongs to the class-II aminoacyl-tRNA synthetase family. HisZ subfamily. In terms of assembly, heteromultimer composed of HisG and HisZ subunits.

The protein resides in the cytoplasm. Its pathway is amino-acid biosynthesis; L-histidine biosynthesis; L-histidine from 5-phospho-alpha-D-ribose 1-diphosphate: step 1/9. In terms of biological role, required for the first step of histidine biosynthesis. May allow the feedback regulation of ATP phosphoribosyltransferase activity by histidine. The protein is ATP phosphoribosyltransferase regulatory subunit of Bacillus thuringiensis (strain Al Hakam).